Reading from the N-terminus, the 2319-residue chain is Coagulation factor VIII (2319 aa).

Positions 1–19 (MQIALFACFFLSLFNFCSS) are cleaved as a signal peptide. Plastocyanin-like domains follow at residues 20–199 (AIRR…LLVC) and 207–349 (ERTQ…VDSC). Residues 20-349 (AIRRYYLGAV…MEAYVKVDSC (330 aa)) enclose the F5/8 type A 1 domain. A glycan (N-linked (GlcNAc...) asparagine) is linked at asparagine 61. Cysteine 173 and cysteine 199 are oxidised to a cystine. 2 N-linked (GlcNAc...) asparagine glycosylation sites follow: asparagine 233 and asparagine 259. Tyrosine 367 carries the sulfotyrosine modification. 2 consecutive Plastocyanin-like domains span residues 399-573 (KTWI…LLIC) and 583-730 (NQMM…VSSC). In terms of domain architecture, F5/8 type A 2 spans 399 to 730 (KTWIHYISAE…MTALLKVSSC (332 aa)). Asparagine 423 carries N-linked (GlcNAc...) asparagine glycosylation. An intrachain disulfide couples cysteine 547 to cysteine 573. N-linked (GlcNAc...) asparagine glycosylation occurs at asparagine 601. Residues tyrosine 737, tyrosine 738, and tyrosine 742 each carry the sulfotyrosine modification. The b stretch occupies residues 760–1640 (SFFQNTNHPN…IPPVLKRHQR (881 aa)). 19 N-linked (GlcNAc...) asparagine glycosylation sites follow: asparagine 880, asparagine 958, asparagine 1015, asparagine 1022, asparagine 1026, asparagine 1044, asparagine 1076, asparagine 1087, asparagine 1136, asparagine 1161, asparagine 1192, asparagine 1255, asparagine 1268, asparagine 1273, asparagine 1274, asparagine 1302, asparagine 1316, asparagine 1340, and asparagine 1378. The interval 1530-1549 (WNKAKRHGESIKGKTESSKN) is disordered. The span at 1536 to 1548 (HGESIKGKTESSK) shows a compositional bias: basic and acidic residues. Residues tyrosine 1669 and tyrosine 1687 each carry the sulfotyrosine modification. 2 Plastocyanin-like domains span residues 1683 to 1845 (KTRH…LLIC) and 1855 to 2008 (GRQV…SKQC). One can recognise an F5/8 type A 3 domain in the interval 1683–2008 (KTRHYFIAAV…TLFLVYSKQC (326 aa)). Asparagine 1797 is a glycosylation site (N-linked (GlcNAc...) asparagine). 3 cysteine pairs are disulfide-bonded: cysteine 1819/cysteine 1845, cysteine 2008/cysteine 2156, and cysteine 2161/cysteine 2313. F5/8 type C domains lie at 2008–2156 (CQIP…LMGC) and 2161–2313 (CSIP…ILGC). A glycan (N-linked (GlcNAc...) asparagine) is linked at asparagine 2105.

Belongs to the multicopper oxidase family. Interacts with vWF. vWF binding is essential for the stabilization of F8 in circulation. The binding of vWF and activation depend on the sulfation of Tyr-1669. Post-translationally, proteolytically cleaved by cathepsin CTSG to produce a partially activated form. As to expression, found in most tissues.

The protein resides in the secreted. The protein localises to the extracellular space. In terms of biological role, factor VIII, along with calcium and phospholipid, acts as a cofactor for factor IXa when it converts factor X to the activated form, factor Xa. The sequence is that of Coagulation factor VIII (F8) from Mus musculus (Mouse).